The following is a 308-amino-acid chain: Vacuolar lysine transporter YPQ1 (308 aa).

Over 1–12 (MQLVPLELNRST) the chain is Vacuolar. An N-linked (GlcNAc...) asparagine glycan is attached at Asn-9. The PQ-loop 1 domain maps to 10–76 (RSTLSGISGS…QHLLSTMIIL (67 aa)). The helical transmembrane segment at 13–33 (LSGISGSISISCWIIVFVPQI) threads the bilayer. Topologically, residues 34–44 (YENFYRKSSDG) are cytoplasmic. A helical transmembrane segment spans residues 45–65 (LSLLFVVLWLAGDVFNLMGAV). Residues 66-68 (MQH) lie on the Vacuolar side of the membrane. Residues 69–89 (LLSTMIILAAYYTVADIILLG) traverse the membrane as a helical segment. Residues 90 to 167 (QCLWYDNEEK…EVNSRNLIKD (78 aa)) lie on the Cytoplasmic side of the membrane. Residues 168–188 (IFIVSGVVFVGFISWYVTYCV) form a helical membrane-spanning segment. Asn-189 is a glycosylation site (N-linked (GlcNAc...) asparagine). Over 189 to 205 (NYTQPPPVEDPSLPVPE) the chain is Vacuolar. The helical transmembrane segment at 206–226 (LQINWMAQIFGYLSALLYLGS) threads the bilayer. The PQ-loop 2 domain occupies 211–274 (MAQIFGYLSA…ISLDWKYLIM (64 aa)). The Cytoplasmic segment spans residues 227-244 (RIPQILLNFKRKSCEGIS). The helical transmembrane segment at 245 to 265 (FLFFLFACLGNTTFIFSVIVI) threads the bilayer. Over 266–277 (SLDWKYLIMNAS) the chain is Vacuolar. An N-linked (GlcNAc...) asparagine glycan is attached at Asn-275. Residues 278–298 (WLVGSIGTLFMDFVIFSQFFI) traverse the membrane as a helical segment. Residues 299-308 (YKRNKKFILN) are Cytoplasmic-facing.

The protein belongs to the laat-1 family.

It is found in the vacuole membrane. Amino acid transporter that moves lysine into the vacuole. May also contribute to low affinity arginine import into the vacuole. Has also been suggested to mediate export of cationic amino acids from the vacuole. May function as an amino acid/proton antiporter. This is Vacuolar lysine transporter YPQ1 (YPQ1) from Saccharomyces cerevisiae (strain ATCC 204508 / S288c) (Baker's yeast).